We begin with the raw amino-acid sequence, 248 residues long: Probable transcriptional regulatory protein SO_2432 (248 aa).

It belongs to the TACO1 family.

Its subcellular location is the cytoplasm. This is Probable transcriptional regulatory protein SO_2432 from Shewanella oneidensis (strain ATCC 700550 / JCM 31522 / CIP 106686 / LMG 19005 / NCIMB 14063 / MR-1).